Here is a 189-residue protein sequence, read N- to C-terminus: dCTP deaminase (189 aa).

DCTP-binding positions include 112 to 117 (KSTYAR), 136 to 138 (TLE), glutamine 157, tyrosine 171, and glutamine 181. Catalysis depends on glutamate 138, which acts as the Proton donor/acceptor.

The protein belongs to the dCTP deaminase family. As to quaternary structure, homotrimer.

It carries out the reaction dCTP + H2O + H(+) = dUTP + NH4(+). Its pathway is pyrimidine metabolism; dUMP biosynthesis; dUMP from dCTP (dUTP route): step 1/2. In terms of biological role, catalyzes the deamination of dCTP to dUTP. The polypeptide is dCTP deaminase (Acinetobacter baylyi (strain ATCC 33305 / BD413 / ADP1)).